The sequence spans 178 residues: Methyltransferase flvH (178 aa).

The Post-SET domain occupies 120–136; sequence QPFNCFCGSQNCLGLIA. The Zn(2+) site is built by Cys124, Cys126, and Cys131.

This sequence belongs to the class V-like SAM-binding methyltransferase superfamily.

It catalyses the reaction L-lysine + 2 S-adenosyl-L-methionine = N(6),N(6)-dimethyl-L-lysine + 2 S-adenosyl-L-homocysteine + 2 H(+). It functions in the pathway secondary metabolite biosynthesis; terpenoid biosynthesis. Its function is as follows. Methyltransferase; part of the gene cluster that mediates the biosynthesis of flavunoidine, an alkaloidal terpenoid with a tetracyclic cage-like core connected to dimethylcadaverine via a C-N bond and acylated with 5,5-dimethyl-L-pipecolate. The tetracyclic core is synthesized by the terpene cyclase flvE and the cytochrome P450 monooxygenase flvD. The terpene cyclase flvE catalyzes the cyclization of farnesyl pyrophosphate (FPP) to form (1R,4R,5S)-(+)-acoradiene and the cytochrome P450 monooxygenase flvD is then responsible for oxidative conversion of (1R,4R,5S)-(+)-acoradiene into the tetracyclic cage present in the final product flavunoidine. In parallel, the N-methyltransferase flvH dimethylates L-lysine to give N,N-dimethyl-L-Lysin which is decarboxylated by flvG to afford dimethylcadaverine. The terpene cyclase-like protein flvF is the enzyme that attaches the dimethylcadaverine precusor at the C-7 of the tetracyclic cage to yield pre-flavunoidine. The cytochrome monooxygenase flvC hydroxylates the C-10 position of pre-flavunoidine whereas the NRPS flvI acylates the terpenoid core at the hydroxylated C-10 with dimethylpipecolate to yield final flavunoidine. The bifunctional enzyme flvA and the dehydrogenase flvB are responsible for the synthesis of the dimethylpipecolate precursor. The PLP-dependent lyase domain of flvA might use L-O-acetyl-homoserine and alpha-keto-isovalerate to form an intermediary ketone that can cyclize intramolecularly to yield an imine. The imine can be reduced by flvB to yield the 6-carboxylated pipecolate. The C-terminal alpha-KG-dependent oxygenase domain of flvA is then proposed to catalyze the decarboxylation to yield dimethylpipecolate. In Aspergillus flavus (strain ATCC 200026 / FGSC A1120 / IAM 13836 / NRRL 3357 / JCM 12722 / SRRC 167), this protein is Methyltransferase flvH.